The sequence spans 689 residues: Pentatricopeptide repeat-containing protein At2g03380, mitochondrial (689 aa).

A mitochondrion-targeting transit peptide spans 1-12; the sequence is MLRSITLSPTRR. PPR repeat units follow at residues 75-105, 106-140, 141-171, 175-205, 206-240, 241-275, 276-306, 307-341, 342-372, 376-406, 407-441, 442-476, 479-509, 510-544, 545-580, and 581-611; these read DISI…IPEP, DFYL…GFRY, DDIV…LVKV, DNVV…ITLR, NVVC…NVLG, NEYT…GIEL, SSCL…HSHV, DLVM…EIKP, NCVT…SIKV, DTNV…ESEK, DIVA…SVTP, NGVT…GFLA, SVHV…IEEK, NTIT…QQKP, NEST…NFTP, and STKH…MPIQ. The tract at residues 616–689 is type E motif; degenerate; the sequence is CFGAFLHGCG…SKIAGHSTME (74 aa).

This sequence belongs to the PPR family. PCMP-E subfamily.

It localises to the mitochondrion. This Arabidopsis thaliana (Mouse-ear cress) protein is Pentatricopeptide repeat-containing protein At2g03380, mitochondrial (PCMP-E47).